The chain runs to 291 residues: Elongation factor Ts, mitochondrial (291 aa).

It belongs to the EF-Ts family.

The protein resides in the mitochondrion. Functionally, associates with the EF-Tu.GDP complex and induces the exchange of GDP to GTP. It remains bound to the aminoacyl-tRNA.EF-Tu.GTP complex up to the GTP hydrolysis stage on the ribosome. In Nematostella vectensis (Starlet sea anemone), this protein is Elongation factor Ts, mitochondrial.